The following is a 212-amino-acid chain: uncharacterized protein (212 aa).

The NERD domain occupies 29–146 (KGKAGEKLVK…AAFHPKCSLK (118 aa)).

This is an uncharacterized protein from Bacillus anthracis.